Reading from the N-terminus, the 484-residue chain is Pentatricopeptide repeat-containing protein At1g09190 (484 aa).

10 PPR repeats span residues 66 to 100 (NVLV…GIWA), 101 to 135 (DEYT…GFHR), 136 to 166 (LGKI…MSER), 167 to 197 (NVVV…MSER), 198 to 232 (SIVS…GFDP), 233 to 267 (DEAT…GLFK), 269 to 299 (FITV…MQRR), 300 to 334 (NVVS…GKVA), 336 to 366 (NEAT…MMER), and 372 to 406 (RTEH…ANAA). The type E motif stretch occupies residues 407–482 (MWGSLLSACR…STGQSTICDV (76 aa)).

It belongs to the PPR family. PCMP-E subfamily.

In Arabidopsis thaliana (Mouse-ear cress), this protein is Pentatricopeptide repeat-containing protein At1g09190 (PCMP-E70).